Consider the following 130-residue polypeptide: Gonadotropin subunit beta-1 (130 aa).

A signal peptide spans 1–18 (MRMHFVVMVMLLPALMMA). 5 cysteine pairs are disulfide-bonded: Cys-26–Cys-74, Cys-40–Cys-89, Cys-51–Cys-105, Cys-55–Cys-107, and Cys-110–Cys-117. N-linked (GlcNAc...) asparagine glycosylation occurs at Asn-30.

Belongs to the glycoprotein hormones subunit beta family. Heterodimer of an alpha and a beta chain.

Its subcellular location is the secreted. In terms of biological role, involved in gametogenesis and steroidogenesis. In Cyprinus carpio (Common carp), this protein is Gonadotropin subunit beta-1 (cgba).